The following is a 704-amino-acid chain: MDSLKLPKANSATSSASGSNSNLSGSTSASASAATSPTSSGTAVGGILSGAPKSPPGLGSSTPISVRFNANEESLDDILQSFHHSKHSPSGGASGGGDASPTSNLLGMKNNGLGLVVGNCDSLSSSPSQPQMHAGSASLFGNDEVSLRNNFMQAGGFFNRKSCGGLPNLNLNKPPQLHQQQHQQQHQQHQQHQQQQQLHQHQQQLSPNLSALHHHHQQQQQLRESGGSHSPSSPGGGGGGSPYNGSQAGCSSGGISPIPPQMGVSPKYRRSISFPIKGNSPTAIYGNMHMDGMGSGHMNIPTLSIGNGGGGGSTGMVSAGATGGGDAPYLGNSYGNMMTSNGQMHHGGGLDNSLCDYMRNMSLGGNGGGDGSNSMSLMQDRMRVMGGPKHLSEADAMAIAASGNDPSVYLNALKMGSPSRLSPHSPHSPIQGGNGGNVGDGTARFSRKVFVGGLPPDIDEDEITTSFRRFGPLVVDWPHKAESKSYFPPKGYAFLLFQDESSVQQLIDSCITDEDKLYLCVSSPTIKDKAVQIRPWRLADADYVLDATMSLDPRKTVFVGGVPRPLKAFELAMIMDRLYGGVCYAGIDTDPELKYPKGAGRVAFSNQQSYIAAISARFVQLQHGDIDKRVEVKPYVLDDQMCDECEGQRCGGKFAPFFCANVTCLQYYCEHCWAVIHSRPGREYHKPLVKEGADRPRAVPFRWC.

The tract at residues 1–64 is disordered; sequence MDSLKLPKAN…PPGLGSSTPI (64 aa). Residues 1 to 87 form a gln/His-rich region; sequence MDSLKLPKAN…ILQSFHHSKH (87 aa). Positions 9 to 42 are enriched in low complexity; sequence ANSATSSASGSNSNLSGSTSASASAATSPTSSGT. Phosphoserine is present on residues Ser-74, Ser-88, and Ser-100. Disordered regions lie at residues 82–106, 166–266, and 417–438; these read FHHS…SNLL, LPNL…GVSP, and SPSR…GGNV. Positions 163–240 are gln/His-rich; that stretch reads CGGLPNLNLN…PSSPGGGGGG (78 aa). Low complexity-rich tracts occupy residues 176 to 205, 218 to 233, and 417 to 429; these read QLHQ…QQQL, QQQQ…SPSS, and SPSR…PHSP. A phosphoserine mark is found at Ser-425 and Ser-428. RRM domains are found at residues 447 to 538 and 555 to 637; these read RKVF…PWRL and KTVF…PYVL.

Monomer. Upon neuronal stimulation, forms stable amyloid-like oligomers composed of isoform A and isoform B which are required for formation of persistent long-term memory. Isoform A is critical for oligomer formation. Phe-5 of isoform A is required for amyloid-like oligomerization. Rapidly forms amyloids and toxic intermediates are extremely transient. Unlike in the adult nervous system, remains monomeric in the early embryo. Interacts with the translational regulator bol. Interacts with Tob; the interaction is enhanced by neuronal stimulation, stabilizes isoform A and induces oligomerization. Post-translationally, phosphorylation regulates interaction with Tob and oligomerization. Protein phosphatase 2A keeps both Orb2 and Tob in an unphosphorylated form. Following synaptic activation, unphosphorylated Orb2 is bound and stabilized by unphosphorylated Tob. Tob recruits activated LimK which phosphorylates both Orb2 and Tob and enhances Orb2 oligomerization. In terms of tissue distribution, broadly expressed throughout the nervous system of embryo, larva and adult including the ventral nerve cord and brain (at protein level). In early embryos, deposited maternally and distributed uniformly throughout the embryo until the extended germband stage. By mid-embryogenesis, highest levels are found in the central and peripheral nervous systems with lower expression also detected in the ectoderm and mesoderm. In adults, high levels are present in the head and body of both sexes with higher expression in testis than ovary. In the ovary, expressed in both germ and follicle cells. In adult head, predominantly neuronal with broad expression throughout the brain and ventral ganglia including the mushroom body.

Its subcellular location is the perikaryon. The protein localises to the cell projection. The protein resides in the axon. It is found in the dendrite. It localises to the synapse. Its subcellular location is the cytoplasm. The protein localises to the perinuclear region. In terms of biological role, RNA-binding protein involved in translational regulation and required for long-term memory. Required in mushroom body gamma neurons for long-term memory in male courtship. Binds to mRNA 3'-UTRs. In its monomeric form, acts as a translational repressor of genes involved in neuronal growth, synapse formation and protein turnover. In its amyloid-like oligomeric form, acts as a translational activator. The monomeric form reduces poly(A) tail length and destabilizes mRNA while the oligomeric form protects and elongates the poly(A) tail and stabilizes mRNA. Involved in asymmetric cell division in the central nervous system. Plays a role in synapse formation and morphology at neuromuscular junctions by modulating the translation of the tumor suppressor brat. Required for the progression of spermatogenesis through meiosis and for sperm differentiation. During sperm differentiation, required to asymmetrically localize and activate the translation of protein kinase aPKC mRNAs which is necessary for spermatid cyst polarization. Also required during spermatid cyst polarization for localization and translation of its own mRNA. Its function is as follows. Required for initial memory acquisition. Following subsequent late dopaminergic pathway activation, recruits isoform B into a complex to activate translation of CaMKII which is required for long-term memory consolidation. The protein is Translational regulator orb2 of Drosophila melanogaster (Fruit fly).